We begin with the raw amino-acid sequence, 572 residues long: Isocitrate dehydrogenase kinase/phosphatase (572 aa).

ATP contacts are provided by residues Ala-317 to Met-323 and Lys-338. The active site involves Asp-373.

It belongs to the AceK family.

The protein localises to the cytoplasm. The catalysed reaction is L-seryl-[isocitrate dehydrogenase] + ATP = O-phospho-L-seryl-[isocitrate dehydrogenase] + ADP + H(+). Its function is as follows. Bifunctional enzyme which can phosphorylate or dephosphorylate isocitrate dehydrogenase (IDH) on a specific serine residue. This is a regulatory mechanism which enables bacteria to bypass the Krebs cycle via the glyoxylate shunt in response to the source of carbon. When bacteria are grown on glucose, IDH is fully active and unphosphorylated, but when grown on acetate or ethanol, the activity of IDH declines drastically concomitant with its phosphorylation. The protein is Isocitrate dehydrogenase kinase/phosphatase of Ectopseudomonas mendocina (strain ymp) (Pseudomonas mendocina).